We begin with the raw amino-acid sequence, 285 residues long: Bifunctional protein FolD (285 aa).

Residues 165 to 167, Ser190, and Ile231 contribute to the NADP(+) site; that span reads GRS.

This sequence belongs to the tetrahydrofolate dehydrogenase/cyclohydrolase family. In terms of assembly, homodimer.

It carries out the reaction (6R)-5,10-methylene-5,6,7,8-tetrahydrofolate + NADP(+) = (6R)-5,10-methenyltetrahydrofolate + NADPH. It catalyses the reaction (6R)-5,10-methenyltetrahydrofolate + H2O = (6R)-10-formyltetrahydrofolate + H(+). It participates in one-carbon metabolism; tetrahydrofolate interconversion. In terms of biological role, catalyzes the oxidation of 5,10-methylenetetrahydrofolate to 5,10-methenyltetrahydrofolate and then the hydrolysis of 5,10-methenyltetrahydrofolate to 10-formyltetrahydrofolate. This Magnetococcus marinus (strain ATCC BAA-1437 / JCM 17883 / MC-1) protein is Bifunctional protein FolD.